The primary structure comprises 363 residues: UDP-3-O-acylglucosamine N-acyltransferase (363 aa).

The active-site Proton acceptor is His266.

Belongs to the transferase hexapeptide repeat family. LpxD subfamily. As to quaternary structure, homotrimer.

The catalysed reaction is a UDP-3-O-[(3R)-3-hydroxyacyl]-alpha-D-glucosamine + a (3R)-hydroxyacyl-[ACP] = a UDP-2-N,3-O-bis[(3R)-3-hydroxyacyl]-alpha-D-glucosamine + holo-[ACP] + H(+). It functions in the pathway bacterial outer membrane biogenesis; LPS lipid A biosynthesis. Catalyzes the N-acylation of UDP-3-O-acylglucosamine using 3-hydroxyacyl-ACP as the acyl donor. Is involved in the biosynthesis of lipid A, a phosphorylated glycolipid that anchors the lipopolysaccharide to the outer membrane of the cell. The protein is UDP-3-O-acylglucosamine N-acyltransferase of Bordetella parapertussis (strain 12822 / ATCC BAA-587 / NCTC 13253).